Here is a 382-residue protein sequence, read N- to C-terminus: Glutaminyl-peptide cyclotransferase-like protein (382 aa).

Residues 35 to 55 traverse the membrane as a helical segment; it reads LLPLLLALAVGSAFYTIWSGW. A disulfide bridge connects residues cysteine 167 and cysteine 191. Aspartate 186 lines the Zn(2+) pocket. Catalysis depends on glutamate 225, which acts as the Proton acceptor. Glutamate 226 is a binding site for Zn(2+). The Proton acceptor role is filled by aspartate 269. Histidine 351 contacts Zn(2+).

This sequence belongs to the glutaminyl-peptide cyclotransferase family.

Its subcellular location is the golgi apparatus membrane. It carries out the reaction N-terminal L-glutaminyl-[peptide] = N-terminal 5-oxo-L-prolyl-[peptide] + NH4(+). In terms of biological role, responsible for the biosynthesis of pyroglutamyl peptides. The chain is Glutaminyl-peptide cyclotransferase-like protein (QPCTL) from Macaca fascicularis (Crab-eating macaque).